The sequence spans 21 residues: Maculatin-1.1 (21 aa).

Phenylalanine amide is present on phenylalanine 21.

In terms of tissue distribution, expressed by the skin dorsal glands.

The protein localises to the secreted. Its function is as follows. Maculatin-1.1 shows significant antibacterial activity against Gram-positive bacteria, less against Gram-negative bacteria. Maculatin-1.1.1 is inactive. The polypeptide is Maculatin-1.1 (Ranoidea genimaculata (Brown-spotted tree frog)).